The chain runs to 326 residues: ATPase GET3 (326 aa).

32–39 (KGGVGKTT) is an ATP binding site. Asp61 is an active-site residue. ATP-binding residues include Glu244 and Asn271. Residues Cys282 and Cys285 each coordinate Zn(2+).

This sequence belongs to the arsA ATPase family. In terms of assembly, homodimer.

Its subcellular location is the cytoplasm. The protein localises to the endoplasmic reticulum. ATPase required for the post-translational delivery of tail-anchored (TA) proteins to the endoplasmic reticulum. Recognizes and selectively binds the transmembrane domain of TA proteins in the cytosol. This complex then targets to the endoplasmic reticulum by membrane-bound receptors, where the tail-anchored protein is released for insertion. This process is regulated by ATP binding and hydrolysis. ATP binding drives the homodimer towards the closed dimer state, facilitating recognition of newly synthesized TA membrane proteins. ATP hydrolysis is required for insertion. Subsequently, the homodimer reverts towards the open dimer state, lowering its affinity for the membrane-bound receptor, and returning it to the cytosol to initiate a new round of targeting. In Phaeosphaeria nodorum (strain SN15 / ATCC MYA-4574 / FGSC 10173) (Glume blotch fungus), this protein is ATPase GET3.